Here is a 425-residue protein sequence, read N- to C-terminus: Putative E3 ubiquitin-protein ligase UBR7 (425 aa).

A UBR-type zinc finger spans residues 44–116 (EKCSYSQGSV…KNLECKLFPD (73 aa)). The PHD-type; atypical zinc-finger motif lies at 132 to 188 (GLYCVCKRPYPDPEDEVPDEMIQCVVCEDWFHGRHLGAIPPESGDFQEMVCQACMRR). A disordered region spans residues 212 to 269 (LPNATGMGDEDVSKPENGAPQDNGLKEDAPEHGRDSVNEVKAEQKNEPCSSSSSESDL). Glycyl lysine isopeptide (Lys-Gly) (interchain with G-Cter in SUMO2) cross-links involve residues K225 and K252. Basic and acidic residues predominate over residues 235–257 (GLKEDAPEHGRDSVNEVKAEQKN). Phosphoserine is present on S264. Residues K274 and K398 each participate in a glycyl lysine isopeptide (Lys-Gly) (interchain with G-Cter in SUMO2) cross-link.

In terms of tissue distribution, expressed in testis and sperm (at protein level).

The enzyme catalyses S-ubiquitinyl-[E2 ubiquitin-conjugating enzyme]-L-cysteine + [acceptor protein]-L-lysine = [E2 ubiquitin-conjugating enzyme]-L-cysteine + N(6)-ubiquitinyl-[acceptor protein]-L-lysine.. The protein operates within protein modification; protein ubiquitination. Functionally, E3 ubiquitin-protein ligase which is a component of the N-end rule pathway. Recognizes and binds to proteins bearing specific N-terminal residues that are destabilizing according to the N-end rule, leading to their ubiquitination and subsequent degradation. In Mus musculus (Mouse), this protein is Putative E3 ubiquitin-protein ligase UBR7 (Ubr7).